Consider the following 239-residue polypeptide: MLTRKQQELLLFIHERMKESGVPPSFDEMKDALDLASKSGIHRLITALEERGFIRRLPNRARALEVIKLPEAMTSSIPPRRTGFSPSVIEGSRGKLQAVPSAPAKQVEEVRNSSSIPVMGRIAAGVPISAIQNNTHDISVPMEMLGSGEHYALEVKGDSMIEAGILDGDTVIIRNATTANPGDIVVALVDDEEATLKRFRRRGASIALEAANPAYETRIFGPDRVKIQGKLVGLIRRYH.

Positions 26–46 (FDEMKDALDLASKSGIHRLIT) form a DNA-binding region, H-T-H motif. Active-site for autocatalytic cleavage activity residues include Ser159 and Lys197.

Belongs to the peptidase S24 family. In terms of assembly, homodimer.

The catalysed reaction is Hydrolysis of Ala-|-Gly bond in repressor LexA.. Its function is as follows. Represses a number of genes involved in the response to DNA damage (SOS response), including recA and lexA. In the presence of single-stranded DNA, RecA interacts with LexA causing an autocatalytic cleavage which disrupts the DNA-binding part of LexA, leading to derepression of the SOS regulon and eventually DNA repair. The chain is LexA repressor from Allorhizobium ampelinum (strain ATCC BAA-846 / DSM 112012 / S4) (Agrobacterium vitis (strain S4)).